The following is a 235-amino-acid chain: Large ribosomal subunit protein uL4 (235 aa).

The segment at 45 to 75 (RAGTASTKTRGEVSGGGRKPWPQKHTGRARH) is disordered. Residues 65-75 (WPQKHTGRARH) show a composition bias toward basic residues.

It belongs to the universal ribosomal protein uL4 family. As to quaternary structure, part of the 50S ribosomal subunit.

One of the primary rRNA binding proteins, this protein initially binds near the 5'-end of the 23S rRNA. It is important during the early stages of 50S assembly. It makes multiple contacts with different domains of the 23S rRNA in the assembled 50S subunit and ribosome. Functionally, forms part of the polypeptide exit tunnel. This Thermotoga petrophila (strain ATCC BAA-488 / DSM 13995 / JCM 10881 / RKU-1) protein is Large ribosomal subunit protein uL4.